Here is a 407-residue protein sequence, read N- to C-terminus: Peptidase T (407 aa).

Histidine 78 lines the Zn(2+) pocket. Residue aspartate 80 is part of the active site. Aspartate 141 lines the Zn(2+) pocket. The Proton acceptor role is filled by glutamate 175. Zn(2+) contacts are provided by glutamate 176, aspartate 198, and histidine 380.

It belongs to the peptidase M20B family. Zn(2+) is required as a cofactor.

It is found in the cytoplasm. It catalyses the reaction Release of the N-terminal residue from a tripeptide.. Functionally, cleaves the N-terminal amino acid of tripeptides. The protein is Peptidase T of Clostridium novyi (strain NT).